A 66-amino-acid chain; its full sequence is Large ribosomal subunit protein bL31 (66 aa).

Zn(2+) is bound by residues Cys16, Cys18, Cys36, and Cys39.

Belongs to the bacterial ribosomal protein bL31 family. Type A subfamily. As to quaternary structure, part of the 50S ribosomal subunit. Zn(2+) is required as a cofactor.

Binds the 23S rRNA. This chain is Large ribosomal subunit protein bL31, found in Campylobacter fetus subsp. fetus (strain 82-40).